A 287-amino-acid chain; its full sequence is Bifunctional protein FolD (287 aa).

NADP(+) contacts are provided by residues 166-168 (GAS) and Ile232.

This sequence belongs to the tetrahydrofolate dehydrogenase/cyclohydrolase family. As to quaternary structure, homodimer.

It carries out the reaction (6R)-5,10-methylene-5,6,7,8-tetrahydrofolate + NADP(+) = (6R)-5,10-methenyltetrahydrofolate + NADPH. The catalysed reaction is (6R)-5,10-methenyltetrahydrofolate + H2O = (6R)-10-formyltetrahydrofolate + H(+). Its pathway is one-carbon metabolism; tetrahydrofolate interconversion. Functionally, catalyzes the oxidation of 5,10-methylenetetrahydrofolate to 5,10-methenyltetrahydrofolate and then the hydrolysis of 5,10-methenyltetrahydrofolate to 10-formyltetrahydrofolate. The chain is Bifunctional protein FolD from Aeromonas hydrophila subsp. hydrophila (strain ATCC 7966 / DSM 30187 / BCRC 13018 / CCUG 14551 / JCM 1027 / KCTC 2358 / NCIMB 9240 / NCTC 8049).